A 251-amino-acid polypeptide reads, in one-letter code: Aliphatic sulfonates import ATP-binding protein SsuB (251 aa).

Positions 3–231 constitute an ABC transporter domain; that stretch reads VSINEVSKYF…PRNKTSQSFQ (229 aa). 39–46 is an ATP binding site; it reads GPSGCGKS.

The protein belongs to the ABC transporter superfamily. Aliphatic sulfonates importer (TC 3.A.1.17.2) family. As to quaternary structure, the complex is composed of two ATP-binding proteins (SsuB), two transmembrane proteins (SsuC) and a solute-binding protein (SsuA).

The protein localises to the cell membrane. It catalyses the reaction ATP + H2O + aliphatic sulfonate-[sulfonate-binding protein]Side 1 = ADP + phosphate + aliphatic sulfonateSide 2 + [sulfonate-binding protein]Side 1.. Its function is as follows. Part of the ABC transporter complex SsuABC involved in aliphatic sulfonates import. Responsible for energy coupling to the transport system. This chain is Aliphatic sulfonates import ATP-binding protein SsuB, found in Bacillus thuringiensis subsp. konkukian (strain 97-27).